An 806-amino-acid polypeptide reads, in one-letter code: Phenylalanine--tRNA ligase beta subunit (806 aa).

The tRNA-binding domain occupies 40 to 155 (NKGVKGVVVG…SDAEVGADAL (116 aa)). A B5 domain is found at 409-484 (VQERTVSVTA…RLYGYDHIPV (76 aa)). D462, D468, E471, and E472 together coordinate Mg(2+). The FDX-ACB domain maps to 712–805 (PRFPSMTRDM…VEEKFGAELR (94 aa)).

Belongs to the phenylalanyl-tRNA synthetase beta subunit family. Type 1 subfamily. In terms of assembly, tetramer of two alpha and two beta subunits. Requires Mg(2+) as cofactor.

It localises to the cytoplasm. The enzyme catalyses tRNA(Phe) + L-phenylalanine + ATP = L-phenylalanyl-tRNA(Phe) + AMP + diphosphate + H(+). The polypeptide is Phenylalanine--tRNA ligase beta subunit (Bacillus thuringiensis subsp. konkukian (strain 97-27)).